The sequence spans 238 residues: Envelope glycoprotein G (238 aa).

A signal peptide spans 1 to 24 (MSQGAMRAVVPIIPFLLVLVGVSG). The Virion surface segment spans residues 25–189 (VPTNVSSTTQ…SFLTASPALD (165 aa)). Asn28 and Asn49 each carry an N-linked (GlcNAc...) asparagine; by host glycan. 2 stretches are compositionally biased toward polar residues: residues 28–42 (NVSSTTQPQLQTTGR) and 49–68 (NMTQTGTTDSPTAISLTTPD). Positions 28-171 (NVSSTTQPQL…LTSKGRPLVP (144 aa)) are disordered. Over residues 78-88 (LEEEEEEEGAG) the composition is skewed to acidic residues. Residues 89–100 (DGEHLEGGDGTR) show a composition bias toward basic and acidic residues. A helical transmembrane segment spans residues 190–210 (TLFVVSTVIHTLSFLCIGAMA). The Intravirion portion of the chain corresponds to 211-238 (THLCGGWSRRGRRTHPSVRYVCLPSERG).

It belongs to the alphaherpesvirinae glycoprotein G family.

It localises to the virion membrane. Chemokine-binding protein that inhibits neutrophils' chemotaxis. This is Envelope glycoprotein G (gG) from Human herpesvirus 1 (strain 17) (HHV-1).